A 135-amino-acid polypeptide reads, in one-letter code: Probable disulfide formation protein (135 aa).

The helical transmembrane segment at 7–26 threads the bilayer; sequence SYCLYLAWLFSCIGTLMSVY. A disulfide bridge connects residues cysteine 36 and cysteine 39. 2 helical membrane-spanning segments follow: residues 41-60 and 67-84; these read YQRI…AYRE and YTLP…YQVC. Cysteine 96 and cysteine 101 are disulfide-bonded. The chain crosses the membrane as a helical span at residues 109-131; sequence GFITMPMASAAAFCAIACLLVLA.

This sequence belongs to the DsbB family. BdbC subfamily.

It localises to the cell inner membrane. Its function is as follows. Required for disulfide bond formation in some proteins. This is Probable disulfide formation protein from Chlamydia trachomatis serovar D (strain ATCC VR-885 / DSM 19411 / UW-3/Cx).